We begin with the raw amino-acid sequence, 2690 residues long: Probable polyketide synthase 28 (2690 aa).

Positions 15–443 (YGDVAVIGIG…GSNVCLILSE (429 aa)) constitute a Ketosynthase family 3 (KS3) domain. Residues cysteine 187, histidine 326, and histidine 366 each act as for beta-ketoacyl synthase activity in the active site. The tract at residues 651 to 684 (GVSADIIVGHSLGELSSSYSSGMIDFETLCHLIY) is acyl/malonyl transferases. Residue serine 661 is the For acyl/malonyl transferase activity of the active site. Positions 906 to 934 (NFKSQLTNINNNNNNINNNNNNNNNNNNN) form a coiled coil. The interval 916-946 (NNNNNINNNNNNNNNNNNNNNNNNNNNNNNN) is disordered. The N-terminal hotdog fold stretch occupies residues 973 to 1102 (HEKITNEGPS…GNFSLFKHNS (130 aa)). Residues 973-1285 (HEKITNEGPS…CSSVSLANPS (313 aa)) form the PKS/mFAS DH domain. Catalysis depends on histidine 1014, which acts as the Proton acceptor; for dehydratase activity. Positions 1119-1285 (NFTTISKHDF…CSSVSLANPS (167 aa)) are C-terminal hotdog fold. The active-site Proton donor; for dehydratase activity is aspartate 1188. Residues 1401–1429 (LNHHNNSENKNKNNNNNNNSNNNENSNNE) are disordered. Residues 1412–1429 (KNNNNNNNSNNNENSNNE) are compositionally biased toward low complexity. The Carrier domain occupies 2594–2671 (SDNEFIHSTI…QSIDIIKFGY (78 aa)). Serine 2631 carries the post-translational modification O-(pantetheine 4'-phosphoryl)serine.

The cofactor is pantetheine 4'-phosphate.

Functionally, probable polyketide synthase. This is Probable polyketide synthase 28 (pks28) from Dictyostelium discoideum (Social amoeba).